A 246-amino-acid chain; its full sequence is Acetoacetate decarboxylase (246 aa).

Lys-116 functions as the Schiff-base intermediate with acetoacetate in the catalytic mechanism.

It belongs to the ADC family.

The enzyme catalyses acetoacetate + H(+) = acetone + CO2. In terms of biological role, catalyzes the conversion of acetoacetate to acetone and carbon dioxide. This chain is Acetoacetate decarboxylase, found in Burkholderia cenocepacia (strain ATCC BAA-245 / DSM 16553 / LMG 16656 / NCTC 13227 / J2315 / CF5610) (Burkholderia cepacia (strain J2315)).